A 387-amino-acid chain; its full sequence is Putative protein FAM157C (387 aa).

3 disordered regions span residues M1 to K21, T182 to P226, and R329 to G353.

This sequence belongs to the FAM157 family.

The chain is Putative protein FAM157C (FAM157C) from Homo sapiens (Human).